The primary structure comprises 254 residues: MSAPEAQQQKRGGFGGRNRGRPNRRGPRNTEEKGWVPVTKLGRLVKAGKITTIEEIFLHSLPVKEFQIIDTLLPGLQDEVMNIKPVQKQTRAGQRTRFKAVVVVGDSNGHVGLGIKTAKEVAGAIRAGIIIAKLSVIPIRRGYWGTNLGQPHSLATKTTGKCGSVTVRLIPAPRGSGIVASPAVKKLLQLAGVEDVYTQSNGKTRTLENTLKAAFVAIGNTYGFLTPNLWAEQPLPVSPLDIYSDEASAQKKRF.

A compositionally biased stretch (polar residues) spans 1–10 (MSAPEAQQQK). The segment at 1–34 (MSAPEAQQQKRGGFGGRNRGRPNRRGPRNTEEKG) is disordered. Ser-2 carries the post-translational modification N-acetylserine. The residue at position 11 (Arg-11) is an Asymmetric dimethylarginine; by HMT1; alternate. Arg-11 is modified (omega-N-methylarginine; by HMT1; alternate). The residue at position 17 (Arg-17) is an Omega-N-methylarginine; by HMT1. Over residues 18–27 (NRGRPNRRGP) the composition is skewed to basic residues. Lys-33 is covalently cross-linked (Glycyl lysine isopeptide (Lys-Gly) (interchain with G-Cter in ubiquitin)). Residues 76–139 (LQDEVMNIKP…IIAKLSVIPI (64 aa)) enclose the S5 DRBM domain.

This sequence belongs to the universal ribosomal protein uS5 family. In terms of assembly, component of the small ribosomal subunit (SSU). Mature yeast ribosomes consist of a small (40S) and a large (60S) subunit. The 40S small subunit contains 1 molecule of ribosomal RNA (18S rRNA) and 33 different proteins (encoded by 57 genes). The large 60S subunit contains 3 rRNA molecules (25S, 5.8S and 5S rRNA) and 46 different proteins (encoded by 81 genes). Interacts with snoRNA U3. Interacts with MPP10. Component of the ribosomal small subunit (SSU) processome composed of at least 40 protein subunits and snoRNA U3. In terms of processing, N-terminally acetylated by acetyltransferase NatA.

The protein resides in the cytoplasm. It is found in the nucleus. Its subcellular location is the nucleolus. Functionally, component of the ribosome, a large ribonucleoprotein complex responsible for the synthesis of proteins in the cell. The small ribosomal subunit (SSU) binds messenger RNAs (mRNAs) and translates the encoded message by selecting cognate aminoacyl-transfer RNA (tRNA) molecules. The large subunit (LSU) contains the ribosomal catalytic site termed the peptidyl transferase center (PTC), which catalyzes the formation of peptide bonds, thereby polymerizing the amino acids delivered by tRNAs into a polypeptide chain. The nascent polypeptides leave the ribosome through a tunnel in the LSU and interact with protein factors that function in enzymatic processing, targeting, and the membrane insertion of nascent chains at the exit of the ribosomal tunnel. uS5 is important for the assembly and function of the 40S ribosomal subunit. Mutations in this protein affects the control of translational fidelity. Involved in nucleolar processing of pre-18S ribosomal RNA and ribosome assembly. This Saccharomyces cerevisiae (strain ATCC 204508 / S288c) (Baker's yeast) protein is Small ribosomal subunit protein uS5.